The sequence spans 158 residues: Large ribosomal subunit protein bL17 (158 aa).

Residues 119–158 form a disordered region; it reads APAAAPEAEEKGEKKAAKAPKAEKAPKAEKKPAKKAAKAE. A compositionally biased stretch (basic and acidic residues) spans 126 to 158; the sequence is AEEKGEKKAAKAPKAEKAPKAEKKPAKKAAKAE.

Belongs to the bacterial ribosomal protein bL17 family. In terms of assembly, part of the 50S ribosomal subunit. Contacts protein L32.

The chain is Large ribosomal subunit protein bL17 from Anaeromyxobacter sp. (strain K).